A 480-amino-acid polypeptide reads, in one-letter code: Cysteine--tRNA ligase (480 aa).

C29 serves as a coordination point for Zn(2+). A 'HIGH' region motif is present at residues 31–41 (VTVYDHCHIGH). The Zn(2+) site is built by C209, H234, and E238. The 'KMSKS' region signature appears at 266–270 (KMSKS). K269 lines the ATP pocket.

The protein belongs to the class-I aminoacyl-tRNA synthetase family. Monomer. The cofactor is Zn(2+).

Its subcellular location is the cytoplasm. The enzyme catalyses tRNA(Cys) + L-cysteine + ATP = L-cysteinyl-tRNA(Cys) + AMP + diphosphate. The protein is Cysteine--tRNA ligase of Geobacter sp. (strain M21).